Consider the following 125-residue polypeptide: Large ribosomal subunit protein bL12 (125 aa).

Belongs to the bacterial ribosomal protein bL12 family. Homodimer. Part of the ribosomal stalk of the 50S ribosomal subunit. Forms a multimeric L10(L12)X complex, where L10 forms an elongated spine to which 2 to 4 L12 dimers bind in a sequential fashion. Binds GTP-bound translation factors.

Forms part of the ribosomal stalk which helps the ribosome interact with GTP-bound translation factors. Is thus essential for accurate translation. The chain is Large ribosomal subunit protein bL12 from Ruthia magnifica subsp. Calyptogena magnifica.